A 326-amino-acid chain; its full sequence is Microtubule-associated protein RP/EB family member 2 (326 aa).

Serine 9 is subject to Phosphoserine. Residues 56-158 (TMSRHDIIAW…FIQWFKKFYD (103 aa)) enclose the Calponin-homology (CH) domain. At tyrosine 166 the chain carries Phosphotyrosine. Disordered regions lie at residues 170–239 (EARQ…DKDL) and 297–326 (YASDEQEGQTEEPEAEEQAHDQQPQQQEEY). The tract at residues 186-326 (QIFNLPKKSH…DQQPQQQEEY (141 aa)) is DCTN1-binding. Over residues 199-233 (SPTAGAAKSSPASKPGSTPSRPSSAKRASSSGSAS) the composition is skewed to low complexity. 2 positions are modified to phosphoserine: serine 218 and serine 235. The region spanning 235–305 (SDKDLETQVI…LYASDEQEGQ (71 aa)) is the EB1 C-terminal domain. Residues 258–301 (EGVEKERDFYFGKLREIELLCQEHGQENDDLVQRLMEVLYASDE) are APC-binding. Residues 300 to 312 (DEQEGQTEEPEAE) show a composition bias toward acidic residues. The span at 317–326 (DQQPQQQEEY) shows a compositional bias: low complexity.

It belongs to the MAPRE family. In terms of assembly, interacts with DCTN1. Interacts with APC (via C-terminal). Interacts with monomeric and polymerized tubulin. Interacts with SLAIN1. Interacts (via the N-terminal region) with BAG1. Interacts with ASB14. Ubiquitinated in an ASB14-dependent manner; leading to proteasomal degradation. Post-translationally, phosphorylated at Ser-235 by CK2 leading to enhanced cell adhesion. Phosphorylated by CDK1 and AURKB during mitosis reduces the binding affinity of MAPRE2 for microtubules. In terms of tissue distribution, expressed during early stages of apico-basal epithelial differentiation but down-regulated in most cells at later stages.

It is found in the cytoplasm. Its subcellular location is the cytoskeleton. The protein resides in the spindle. In terms of biological role, adapter protein that is involved in microtubule polymerization, and spindle function by stabilizing microtubules and anchoring them at centrosomes. Therefore, ensures mitotic progression and genome stability. Acts as a central regulator of microtubule reorganization in apico-basal epithelial differentiation. Plays a role during oocyte meiosis by regulating microtubule dynamics. Participates in neurite growth by interacting with plexin B3/PLXNB3 and microtubule reorganization during apico-basal epithelial differentiation. Plays also an essential role for cell migration and focal adhesion dynamics. Mechanistically, recruits HAX1 to microtubules in order to regulate focal adhesion dynamics. The polypeptide is Microtubule-associated protein RP/EB family member 2 (Mapre2) (Mus musculus (Mouse)).